A 591-amino-acid polypeptide reads, in one-letter code: Aspartate--tRNA ligase (591 aa).

L-aspartate is bound at residue Glu-173. The segment at 197–200 (QLFK) is aspartate. Arg-219 serves as a coordination point for L-aspartate. Residues 219–221 (RDE) and Gln-228 contribute to the ATP site. His-448 is a binding site for L-aspartate. Glu-482 is a binding site for ATP. Arg-489 contributes to the L-aspartate binding site. 534 to 537 (GLDR) is a binding site for ATP.

It belongs to the class-II aminoacyl-tRNA synthetase family. Type 1 subfamily. Homodimer.

The protein localises to the cytoplasm. It carries out the reaction tRNA(Asp) + L-aspartate + ATP = L-aspartyl-tRNA(Asp) + AMP + diphosphate. Its function is as follows. Catalyzes the attachment of L-aspartate to tRNA(Asp) in a two-step reaction: L-aspartate is first activated by ATP to form Asp-AMP and then transferred to the acceptor end of tRNA(Asp). In Shewanella sp. (strain MR-7), this protein is Aspartate--tRNA ligase.